The sequence spans 156 residues: Small ribosomal subunit protein uS7c (156 aa).

Belongs to the universal ribosomal protein uS7 family. As to quaternary structure, part of the 30S ribosomal subunit.

The protein resides in the plastid. The protein localises to the chloroplast. One of the primary rRNA binding proteins, it binds directly to 16S rRNA where it nucleates assembly of the head domain of the 30S subunit. The chain is Small ribosomal subunit protein uS7c (rps7) from Euglena gracilis.